The primary structure comprises 315 residues: Homoserine O-succinyltransferase (315 aa).

The active-site Acyl-thioester intermediate is the Cys-142. 2 residues coordinate substrate: Lys-163 and Ser-192. The active-site Proton acceptor is the His-235. Glu-237 is a catalytic residue. Arg-249 lines the substrate pocket.

Belongs to the MetA family.

It localises to the cytoplasm. The catalysed reaction is L-homoserine + succinyl-CoA = O-succinyl-L-homoserine + CoA. It functions in the pathway amino-acid biosynthesis; L-methionine biosynthesis via de novo pathway; O-succinyl-L-homoserine from L-homoserine: step 1/1. Functionally, transfers a succinyl group from succinyl-CoA to L-homoserine, forming succinyl-L-homoserine. The sequence is that of Homoserine O-succinyltransferase from Shewanella piezotolerans (strain WP3 / JCM 13877).